Here is a 221-residue protein sequence, read N- to C-terminus: Fructokinase (221 aa).

This sequence belongs to the carbohydrate kinase PfkB family.

The enzyme catalyses D-fructose + ATP = D-fructose 6-phosphate + ADP + H(+). The protein is Fructokinase (scrK) of Salmonella thompson.